Here is a 225-residue protein sequence, read N- to C-terminus: Uracil-DNA glycosylase (225 aa).

The active-site Proton acceptor is the Asp65.

Belongs to the uracil-DNA glycosylase (UDG) superfamily. UNG family.

It localises to the cytoplasm. The enzyme catalyses Hydrolyzes single-stranded DNA or mismatched double-stranded DNA and polynucleotides, releasing free uracil.. Its function is as follows. Excises uracil residues from the DNA which can arise as a result of misincorporation of dUMP residues by DNA polymerase or due to deamination of cytosine. This chain is Uracil-DNA glycosylase, found in Bacillus thuringiensis subsp. konkukian (strain 97-27).